A 276-amino-acid chain; its full sequence is Biotin synthase (276 aa).

One can recognise a Radical SAM core domain in the interval 1–226 (MKKIYLCAIS…EAIIMLAGGR (226 aa)). Positions 17, 21, and 24 each coordinate [4Fe-4S] cluster. C61, C95, and C153 together coordinate [2Fe-2S] cluster.

The protein belongs to the radical SAM superfamily. Biotin synthase family. Homodimer. Requires [4Fe-4S] cluster as cofactor. [2Fe-2S] cluster serves as cofactor.

It catalyses the reaction (4R,5S)-dethiobiotin + (sulfur carrier)-SH + 2 reduced [2Fe-2S]-[ferredoxin] + 2 S-adenosyl-L-methionine = (sulfur carrier)-H + biotin + 2 5'-deoxyadenosine + 2 L-methionine + 2 oxidized [2Fe-2S]-[ferredoxin]. It participates in cofactor biosynthesis; biotin biosynthesis; biotin from 7,8-diaminononanoate: step 2/2. Its function is as follows. Catalyzes the conversion of dethiobiotin (DTB) to biotin by the insertion of a sulfur atom into dethiobiotin via a radical-based mechanism. In Nautilia profundicola (strain ATCC BAA-1463 / DSM 18972 / AmH), this protein is Biotin synthase.